We begin with the raw amino-acid sequence, 85 residues long: UPF0297 protein CD630_12830 (85 aa).

It belongs to the UPF0297 family.

The chain is UPF0297 protein CD630_12830 from Clostridioides difficile (strain 630) (Peptoclostridium difficile).